A 396-amino-acid chain; its full sequence is NADH-quinone oxidoreductase subunit D 1 (396 aa).

Belongs to the complex I 49 kDa subunit family. NDH-1 is composed of 14 different subunits. Subunits NuoB, C, D, E, F, and G constitute the peripheral sector of the complex.

The protein resides in the cell inner membrane. It carries out the reaction a quinone + NADH + 5 H(+)(in) = a quinol + NAD(+) + 4 H(+)(out). Its function is as follows. NDH-1 shuttles electrons from NADH, via FMN and iron-sulfur (Fe-S) centers, to quinones in the respiratory chain. The immediate electron acceptor for the enzyme in this species is believed to be ubiquinone. Couples the redox reaction to proton translocation (for every two electrons transferred, four hydrogen ions are translocated across the cytoplasmic membrane), and thus conserves the redox energy in a proton gradient. This Beijerinckia indica subsp. indica (strain ATCC 9039 / DSM 1715 / NCIMB 8712) protein is NADH-quinone oxidoreductase subunit D 1.